The primary structure comprises 357 residues: S-adenosylmethionine:tRNA ribosyltransferase-isomerase (357 aa).

It belongs to the QueA family. As to quaternary structure, monomer.

It localises to the cytoplasm. The catalysed reaction is 7-aminomethyl-7-carbaguanosine(34) in tRNA + S-adenosyl-L-methionine = epoxyqueuosine(34) in tRNA + adenine + L-methionine + 2 H(+). It functions in the pathway tRNA modification; tRNA-queuosine biosynthesis. In terms of biological role, transfers and isomerizes the ribose moiety from AdoMet to the 7-aminomethyl group of 7-deazaguanine (preQ1-tRNA) to give epoxyqueuosine (oQ-tRNA). The chain is S-adenosylmethionine:tRNA ribosyltransferase-isomerase from Buchnera aphidicola subsp. Acyrthosiphon pisum (strain Tuc7).